Reading from the N-terminus, the 393-residue chain is Sialyltransferase-like protein 1 (393 aa).

The Cytoplasmic portion of the chain corresponds to 1–8 (MKRPLRRP). A helical; Signal-anchor for type II membrane protein membrane pass occupies residues 9 to 27 (FAVLLFVVLCAAASFPSVL). At 28 to 393 (RRSVGPAPVL…IAVPPVVFYH (366 aa)) the chain is on the lumenal side. 3 N-linked (GlcNAc...) asparagine glycosylation sites follow: asparagine 49, asparagine 212, and asparagine 258.

It belongs to the glycosyltransferase 29 family. In terms of tissue distribution, expressed in leaves and stalks. Expressed at low levels in roots.

It localises to the golgi apparatus membrane. Its function is as follows. Possesses sialyltransferase-like activity in vitro. Transfers sialic acid to the oligosaccharide Gal-beta-1,3-GalNAc and to glycoproteins such as asialofetuin, alpha-1-acid glycoprotein (NeuAc-alpha-2,3-Gal-beta-1,3-GalNAc-) and andasialo-alpha-1-acid glycoprotein. The transferred sialic acid is linked to galactose of Gal-beta-1,3-GalNAc through alpha-2,6-linkage. The sequence is that of Sialyltransferase-like protein 1 from Oryza sativa subsp. japonica (Rice).